The primary structure comprises 395 residues: Elongation factor Tu (395 aa).

In terms of domain architecture, tr-type G spans 10–205; sequence KPHVNIGTIG…VDSYIPLPPR (196 aa). Residues 19-26 form a G1 region; sequence GHVDHGKT. 19-26 is a binding site for GTP; it reads GHVDHGKT. Threonine 26 lines the Mg(2+) pocket. The tract at residues 60–64 is G2; the sequence is GITIN. Residues 81–84 form a G3 region; the sequence is DCPG. Residues 81–85 and 136–139 contribute to the GTP site; these read DCPGH and NKVD. Residues 136–139 form a G4 region; the sequence is NKVD. Positions 174–176 are G5; sequence SAT.

The protein belongs to the TRAFAC class translation factor GTPase superfamily. Classic translation factor GTPase family. EF-Tu/EF-1A subfamily. In terms of assembly, monomer.

The protein resides in the cytoplasm. The enzyme catalyses GTP + H2O = GDP + phosphate + H(+). GTP hydrolase that promotes the GTP-dependent binding of aminoacyl-tRNA to the A-site of ribosomes during protein biosynthesis. This chain is Elongation factor Tu, found in Terrimonas ferruginea (Flavobacterium ferrugineum).